Consider the following 187-residue polypeptide: dTTP/UTP pyrophosphatase (187 aa).

D68 functions as the Proton acceptor in the catalytic mechanism.

This sequence belongs to the Maf family. YhdE subfamily. Requires a divalent metal cation as cofactor.

The protein localises to the cytoplasm. The catalysed reaction is dTTP + H2O = dTMP + diphosphate + H(+). It carries out the reaction UTP + H2O = UMP + diphosphate + H(+). Its function is as follows. Nucleoside triphosphate pyrophosphatase that hydrolyzes dTTP and UTP. May have a dual role in cell division arrest and in preventing the incorporation of modified nucleotides into cellular nucleic acids. This is dTTP/UTP pyrophosphatase from Thermus thermophilus (strain ATCC BAA-163 / DSM 7039 / HB27).